The following is a 117-amino-acid chain: Large ribosomal subunit protein bL20 (117 aa).

It belongs to the bacterial ribosomal protein bL20 family.

Its function is as follows. Binds directly to 23S ribosomal RNA and is necessary for the in vitro assembly process of the 50S ribosomal subunit. It is not involved in the protein synthesizing functions of that subunit. The chain is Large ribosomal subunit protein bL20 from Helicobacter hepaticus (strain ATCC 51449 / 3B1).